The chain runs to 134 residues: Small ribosomal subunit protein uS9c (134 aa).

The span at 105–114 (DHHLTRDARA) shows a compositional bias: basic and acidic residues. Residues 105 to 134 (DHHLTRDARAKERKKYGLHKARKAPQYSKR) are disordered. Over residues 115–134 (KERKKYGLHKARKAPQYSKR) the composition is skewed to basic residues.

Belongs to the universal ribosomal protein uS9 family.

Its subcellular location is the plastid. It localises to the cyanelle. This chain is Small ribosomal subunit protein uS9c (rps9), found in Cyanophora paradoxa.